The sequence spans 213 residues: Orotate phosphoribosyltransferase (213 aa).

Lysine 26 provides a ligand contact to 5-phospho-alpha-D-ribose 1-diphosphate. 34-35 (FF) contacts orotate. Residues 72-73 (YK), arginine 99, lysine 100, lysine 103, histidine 105, and 124-132 (DDVITAGTA) contribute to the 5-phospho-alpha-D-ribose 1-diphosphate site. 2 residues coordinate orotate: threonine 128 and arginine 156.

Belongs to the purine/pyrimidine phosphoribosyltransferase family. PyrE subfamily. In terms of assembly, homodimer. Mg(2+) is required as a cofactor.

The enzyme catalyses orotidine 5'-phosphate + diphosphate = orotate + 5-phospho-alpha-D-ribose 1-diphosphate. It functions in the pathway pyrimidine metabolism; UMP biosynthesis via de novo pathway; UMP from orotate: step 1/2. Functionally, catalyzes the transfer of a ribosyl phosphate group from 5-phosphoribose 1-diphosphate to orotate, leading to the formation of orotidine monophosphate (OMP). The protein is Orotate phosphoribosyltransferase of Vibrio cholerae serotype O1 (strain ATCC 39315 / El Tor Inaba N16961).